The chain runs to 358 residues: MFDQLDIVEERYEQLNEMLSDPDVVNNPDNLRKYSKEQAELQKTVDVYRDYKQTKEDISEVEEMLRDTKDNDEIEMLKEEHQTLQNKVPKLEEELKFLLIPKDPNDDKDVIVEIRAAAGGDEAAIFAGDLFRMYSKYAETLNYKTDIVEVTESDHGGYKEISFSVSGNGAFSKLKYENGAHRVQRVPETESGGRIHTSTATVAVLPEVEDVEIEVRNEDLKIDTYRSSGAGGQHVNTTDSAVRITHIPTGVIATSSEKSQIQNREKALKVLKARLFDMKLQEEQQKYAAQRKSAVGTGDRSERIRTYNYPQSRVTDHRIGLTLQKLDQIMEGKLDEIIDALTLAEQTDKLKELNNGEL.

Position 233 is an N5-methylglutamine (Q233).

It belongs to the prokaryotic/mitochondrial release factor family. Post-translationally, methylated by PrmC. Methylation increases the termination efficiency of RF1.

It is found in the cytoplasm. In terms of biological role, peptide chain release factor 1 directs the termination of translation in response to the peptide chain termination codons UAG and UAA. The chain is Peptide chain release factor 1 from Staphylococcus saprophyticus subsp. saprophyticus (strain ATCC 15305 / DSM 20229 / NCIMB 8711 / NCTC 7292 / S-41).